A 222-amino-acid chain; its full sequence is Cytidylate kinase (222 aa).

9–17 is a binding site for ATP; that stretch reads GPAGSGKTT.

Belongs to the cytidylate kinase family. Type 1 subfamily.

Its subcellular location is the cytoplasm. It carries out the reaction CMP + ATP = CDP + ADP. It catalyses the reaction dCMP + ATP = dCDP + ADP. This is Cytidylate kinase from Thermosipho africanus (strain TCF52B).